The sequence spans 262 residues: Hydroxyethylthiazole kinase (262 aa).

Methionine 50 contacts substrate. Positions 125 and 171 each coordinate ATP. Glycine 198 lines the substrate pocket.

The protein belongs to the Thz kinase family. Mg(2+) is required as a cofactor.

The enzyme catalyses 5-(2-hydroxyethyl)-4-methylthiazole + ATP = 4-methyl-5-(2-phosphooxyethyl)-thiazole + ADP + H(+). It participates in cofactor biosynthesis; thiamine diphosphate biosynthesis; 4-methyl-5-(2-phosphoethyl)-thiazole from 5-(2-hydroxyethyl)-4-methylthiazole: step 1/1. Its function is as follows. Catalyzes the phosphorylation of the hydroxyl group of 4-methyl-5-beta-hydroxyethylthiazole (THZ). This chain is Hydroxyethylthiazole kinase, found in Escherichia coli O17:K52:H18 (strain UMN026 / ExPEC).